Reading from the N-terminus, the 333-residue chain is 4-hydroxy-3-methylbut-2-enyl diphosphate reductase (333 aa).

C34 contacts [4Fe-4S] cluster. (2E)-4-hydroxy-3-methylbut-2-enyl diphosphate-binding residues include H63 and H96. The dimethylallyl diphosphate site is built by H63 and H96. Residues H63 and H96 each coordinate isopentenyl diphosphate. C118 is a [4Fe-4S] cluster binding site. A (2E)-4-hydroxy-3-methylbut-2-enyl diphosphate-binding site is contributed by H146. Position 146 (H146) interacts with dimethylallyl diphosphate. Isopentenyl diphosphate is bound at residue H146. E148 serves as the catalytic Proton donor. T186 is a binding site for (2E)-4-hydroxy-3-methylbut-2-enyl diphosphate. C216 contributes to the [4Fe-4S] cluster binding site. (2E)-4-hydroxy-3-methylbut-2-enyl diphosphate contacts are provided by S244, S245, N246, and S289. Positions 244, 245, 246, and 289 each coordinate dimethylallyl diphosphate. S244, S245, N246, and S289 together coordinate isopentenyl diphosphate.

This sequence belongs to the IspH family. The cofactor is [4Fe-4S] cluster.

The enzyme catalyses isopentenyl diphosphate + 2 oxidized [2Fe-2S]-[ferredoxin] + H2O = (2E)-4-hydroxy-3-methylbut-2-enyl diphosphate + 2 reduced [2Fe-2S]-[ferredoxin] + 2 H(+). The catalysed reaction is dimethylallyl diphosphate + 2 oxidized [2Fe-2S]-[ferredoxin] + H2O = (2E)-4-hydroxy-3-methylbut-2-enyl diphosphate + 2 reduced [2Fe-2S]-[ferredoxin] + 2 H(+). It participates in isoprenoid biosynthesis; dimethylallyl diphosphate biosynthesis; dimethylallyl diphosphate from (2E)-4-hydroxy-3-methylbutenyl diphosphate: step 1/1. It functions in the pathway isoprenoid biosynthesis; isopentenyl diphosphate biosynthesis via DXP pathway; isopentenyl diphosphate from 1-deoxy-D-xylulose 5-phosphate: step 6/6. Catalyzes the conversion of 1-hydroxy-2-methyl-2-(E)-butenyl 4-diphosphate (HMBPP) into a mixture of isopentenyl diphosphate (IPP) and dimethylallyl diphosphate (DMAPP). Acts in the terminal step of the DOXP/MEP pathway for isoprenoid precursor biosynthesis. In Mycobacterium sp. (strain KMS), this protein is 4-hydroxy-3-methylbut-2-enyl diphosphate reductase.